Consider the following 82-residue polypeptide: RNA-binding protein Hfq (82 aa).

Positions 9–68 (DPYLNTLRKERVPVSIYLVNGIKLQGQIESFDQFVILLKNTVSQMVYKTAISTVVPSRPV) constitute a Sm domain.

The protein belongs to the Hfq family. As to quaternary structure, homohexamer.

In terms of biological role, RNA chaperone that binds small regulatory RNA (sRNAs) and mRNAs to facilitate mRNA translational regulation in response to envelope stress, environmental stress and changes in metabolite concentrations. Also binds with high specificity to tRNAs. The chain is RNA-binding protein Hfq from Pseudomonas aeruginosa.